We begin with the raw amino-acid sequence, 203 residues long: Glycerol-3-phosphate acyltransferase (203 aa).

4 helical membrane passes run 7–27, 82–102, 118–138, and 141–161; these read TLLM…VLVC, AVSL…PVFF, APIG…LLLI, and YSSL…WWLD.

The protein belongs to the PlsY family. Probably interacts with PlsX.

It is found in the cell inner membrane. The enzyme catalyses an acyl phosphate + sn-glycerol 3-phosphate = a 1-acyl-sn-glycero-3-phosphate + phosphate. Its pathway is lipid metabolism; phospholipid metabolism. In terms of biological role, catalyzes the transfer of an acyl group from acyl-phosphate (acyl-PO(4)) to glycerol-3-phosphate (G3P) to form lysophosphatidic acid (LPA). This enzyme utilizes acyl-phosphate as fatty acyl donor, but not acyl-CoA or acyl-ACP. This is Glycerol-3-phosphate acyltransferase from Shewanella baltica (strain OS223).